The chain runs to 299 residues: ATP phosphoribosyltransferase (299 aa).

It belongs to the ATP phosphoribosyltransferase family. Long subfamily. The cofactor is Mg(2+).

Its subcellular location is the cytoplasm. It carries out the reaction 1-(5-phospho-beta-D-ribosyl)-ATP + diphosphate = 5-phospho-alpha-D-ribose 1-diphosphate + ATP. The protein operates within amino-acid biosynthesis; L-histidine biosynthesis; L-histidine from 5-phospho-alpha-D-ribose 1-diphosphate: step 1/9. Feedback inhibited by histidine. Catalyzes the condensation of ATP and 5-phosphoribose 1-diphosphate to form N'-(5'-phosphoribosyl)-ATP (PR-ATP). Has a crucial role in the pathway because the rate of histidine biosynthesis seems to be controlled primarily by regulation of HisG enzymatic activity. This is ATP phosphoribosyltransferase from Campylobacter jejuni subsp. doylei (strain ATCC BAA-1458 / RM4099 / 269.97).